A 36-amino-acid polypeptide reads, in one-letter code: Photosystem II reaction center protein M (36 aa).

A helical membrane pass occupies residues 5–25 (ILGVIATALFIIIPTSFLLIL).

This sequence belongs to the PsbM family. In terms of assembly, PSII is composed of 1 copy each of membrane proteins PsbA, PsbB, PsbC, PsbD, PsbE, PsbF, PsbH, PsbI, PsbJ, PsbK, PsbL, PsbM, PsbT, PsbX, PsbY, PsbZ, Psb30/Ycf12, at least 3 peripheral proteins of the oxygen-evolving complex and a large number of cofactors. It forms dimeric complexes.

It localises to the plastid. The protein resides in the chloroplast thylakoid membrane. Its function is as follows. One of the components of the core complex of photosystem II (PSII). PSII is a light-driven water:plastoquinone oxidoreductase that uses light energy to abstract electrons from H(2)O, generating O(2) and a proton gradient subsequently used for ATP formation. It consists of a core antenna complex that captures photons, and an electron transfer chain that converts photonic excitation into a charge separation. This subunit is found at the monomer-monomer interface. In Chlorella vulgaris (Green alga), this protein is Photosystem II reaction center protein M.